Reading from the N-terminus, the 182-residue chain is Putative manganese efflux pump MntP (182 aa).

The next 5 helical transmembrane spans lie at 3-23 (ILLL…SNGA), 42-62 (FFQG…VGFI), 65-85 (IDHF…IFDS), 126-146 (IWFS…AATF), and 161-181 (ILGG…HLGI).

Belongs to the MntP (TC 9.B.29) family.

Its subcellular location is the cell inner membrane. In terms of biological role, probably functions as a manganese efflux pump. The chain is Putative manganese efflux pump MntP from Campylobacter hominis (strain ATCC BAA-381 / DSM 21671 / CCUG 45161 / LMG 19568 / NCTC 13146 / CH001A).